The following is a 264-amino-acid chain: DNA-directed RNA polymerase subunit Rpo3 (264 aa).

3 residues coordinate [3Fe-4S] cluster: Cys-203, Cys-206, and Cys-209.

Belongs to the archaeal Rpo3/eukaryotic RPB3 RNA polymerase subunit family. As to quaternary structure, part of the RNA polymerase complex. The cofactor is [3Fe-4S] cluster.

It localises to the cytoplasm. The catalysed reaction is RNA(n) + a ribonucleoside 5'-triphosphate = RNA(n+1) + diphosphate. In terms of biological role, DNA-dependent RNA polymerase (RNAP) catalyzes the transcription of DNA into RNA using the four ribonucleoside triphosphates as substrates. This chain is DNA-directed RNA polymerase subunit Rpo3, found in Archaeoglobus fulgidus (strain ATCC 49558 / DSM 4304 / JCM 9628 / NBRC 100126 / VC-16).